The primary structure comprises 512 residues: rRNA N(6)-adenosine-methyltransferase ZCCHC4 (512 aa).

Residues Cys-39, His-41, Cys-63, Cys-72, Cys-124, Cys-127, His-139, and His-142 each coordinate Zn(2+). Residues 39 to 81 (CPHGPTLLFVKVNQGKEETRKFYACSACRDRKDCNFFQWEDEK) form a GRF-type zinc finger. S-adenosyl-L-methionine-binding positions include 171 to 174 (QYLF), Arg-201, Asp-223, 241 to 242 (NM), and Asp-274. The interval 335–355 (QVDYDNHALYKHGKTGRKQSP) is regulatory loop. 16 residues coordinate Zn(2+): Cys-378, Cys-381, His-391, Cys-392, Cys-395, Cys-398, His-408, Cys-409, Cys-412, Cys-415, His-422, Cys-423, Cys-426, Cys-429, His-434, and Cys-436. Positions 393 to 445 (VHCNSCTSKDGRKWSHCFLCKKCVKPSWIHCNTCNRCALPDHSCLGPKDGCFI) constitute a DHHC domain. The CCHC-type zinc finger occupies 441–458 (DGCFICGALDHKRSNCPN).

It belongs to the ZCCHC4 family. Interacts with components of the ASC-1 complex TRIP4, ASCC1, ASCC2 and ASCC3. Interact with AHCYL1 and AHCYL2. Interact with YTHDC2.

The protein localises to the cytoplasm. It localises to the nucleus. Its subcellular location is the nucleolus. The enzyme catalyses adenosine(4220) in 28S rRNA + S-adenosyl-L-methionine = N(6)-methyladenosine(4220) in 28S rRNA + S-adenosyl-L-homocysteine + H(+). Its function is as follows. rRNA N6-methyltransferase that specifically methylates the adenine in position 4220 of 28S rRNA. N6-methylation of adenine(4220) in 28S rRNA is required for translation. The sequence is that of rRNA N(6)-adenosine-methyltransferase ZCCHC4 from Mus musculus (Mouse).